A 785-amino-acid chain; its full sequence is E3 UFM1-protein ligase 1 homolog (785 aa).

The interval 405–483 (ASFQDQDDDG…GGGGGNKKTV (79 aa)) is disordered.

Belongs to the UFL1 family.

E3 UFM1-protein ligase that mediates ufmylation of target proteins. The sequence is that of E3 UFM1-protein ligase 1 homolog from Drosophila pseudoobscura pseudoobscura (Fruit fly).